A 327-amino-acid polypeptide reads, in one-letter code: MKNRSYEYDVALSFAGENRAYVERVANSLKTKGVKVFYDLFEEANLWGKNLYEYLSEIYQNKARYTVLFVSSFYNKKLWTNHERVSMQARAFQESREYILPARFDDTEIPGILKTIGYINLENRTPEELAVLIENKLKKDQTFFKNRWSKLSTMISPKPFIFTIKVVDEKSQLVKHAKVVLVANNSTYLEGYTDENGLAHFVIRTRKLYTVLIAHSEYPAVVFKSMNPKEDIEVTIEKTNNSGSVIINKSGQIPGISGKIEPVLKSDKNLSVYADNIAIEGGKDQPYDFELNKSIVLEDNKGNIVHLTFRFYQARIALIDFYRGRSM.

The segment at 10–120 (VALSFAGENR…GILKTIGYIN (111 aa)) is TIR domain. Residue Lys-229 is part of the active site.

In terms of assembly, homodimer.

The catalysed reaction is NADP(+) + H2O = ADP-D-ribose 2'-phosphate + nicotinamide + H(+). It carries out the reaction NAD(+) = 3'cADPR + nicotinamide + H(+). Its function is as follows. NAD(+) hydrolase (NADase) that generates 3'cADPR, a cyclization variant of cyclic ADP-D-ribose (also called v2-cADPR). Also cleaves NADP(+), but does not cyclize the product. In Aquimarina amphilecti, this protein is 3' cyclic ADP-D-ribose synthase AaTIR.